The primary structure comprises 222 residues: Probable GTP-binding protein EngB (222 aa).

Residues 22-197 (TSAEIAFVGR…ETVVAGWFAG (176 aa)) form the EngB-type G domain. The Mg(2+) site is built by serine 37 and threonine 59. The segment at 201–222 (RQADELTDGEPDDRTPDPDSAS) is disordered. The span at 212 to 222 (DDRTPDPDSAS) shows a compositional bias: basic and acidic residues.

The protein belongs to the TRAFAC class TrmE-Era-EngA-EngB-Septin-like GTPase superfamily. EngB GTPase family. It depends on Mg(2+) as a cofactor.

Functionally, necessary for normal cell division and for the maintenance of normal septation. In Laribacter hongkongensis (strain HLHK9), this protein is Probable GTP-binding protein EngB.